The primary structure comprises 491 residues: Protein nucleotidyltransferase YdiU (491 aa).

ATP contacts are provided by G92, G94, R95, K115, D127, G128, R178, and R185. D254 acts as the Proton acceptor in catalysis. Mg(2+) contacts are provided by N255 and D264. Position 264 (D264) interacts with ATP.

Belongs to the SELO family. It depends on Mg(2+) as a cofactor. The cofactor is Mn(2+).

It carries out the reaction L-seryl-[protein] + ATP = 3-O-(5'-adenylyl)-L-seryl-[protein] + diphosphate. It catalyses the reaction L-threonyl-[protein] + ATP = 3-O-(5'-adenylyl)-L-threonyl-[protein] + diphosphate. The enzyme catalyses L-tyrosyl-[protein] + ATP = O-(5'-adenylyl)-L-tyrosyl-[protein] + diphosphate. The catalysed reaction is L-histidyl-[protein] + UTP = N(tele)-(5'-uridylyl)-L-histidyl-[protein] + diphosphate. It carries out the reaction L-seryl-[protein] + UTP = O-(5'-uridylyl)-L-seryl-[protein] + diphosphate. It catalyses the reaction L-tyrosyl-[protein] + UTP = O-(5'-uridylyl)-L-tyrosyl-[protein] + diphosphate. In terms of biological role, nucleotidyltransferase involved in the post-translational modification of proteins. It can catalyze the addition of adenosine monophosphate (AMP) or uridine monophosphate (UMP) to a protein, resulting in modifications known as AMPylation and UMPylation. In Pseudarthrobacter chlorophenolicus (strain ATCC 700700 / DSM 12829 / CIP 107037 / JCM 12360 / KCTC 9906 / NCIMB 13794 / A6) (Arthrobacter chlorophenolicus), this protein is Protein nucleotidyltransferase YdiU.